We begin with the raw amino-acid sequence, 639 residues long: Protein zwilch homolog (639 aa).

The segment covering 76 to 95 (QKTSSLLNRRENKKTIKSEK) has biased composition (basic and acidic residues). Residues 76-116 (QKTSSLLNRRENKKTIKSEKEDESMDMETAEGDKENTVSET) form a disordered region. Acidic residues predominate over residues 96 to 105 (EDESMDMETA).

Belongs to the ZWILCH family. In terms of assembly, component of the RZZ complex composed of rod-1, czw-1 and zwl-1. Interacts with the spindly-like protein spdl-1. Interacts with NDC80 complex component ndc-80.

The protein resides in the cytoplasm. Its subcellular location is the cell cortex. The protein localises to the chromosome. It localises to the centromere. It is found in the kinetochore. The protein resides in the cytoskeleton. Its subcellular location is the spindle. Essential component of the mitotic checkpoint, which prevents cells from prematurely exiting mitosis. Required for chromosome segregation, the assembly of the dynein-dynactin and mdf-1-mdf-2 complexes onto kinetochores and spindle pole separation. Its function related to the spindle assembly machinery and kinetochore-microtubule attachments likely depends on its association in the mitotic RZZ complex. The RZZ complex recruits the spindly-like protein spdl-1 to kinetochores. To prevent irregular chromosome segregation, the complex also inhibits the attachment of the kinetochore-associated NDC80 complex to microtubules. The recruitment of spdl-1 to kinetochores relieves this inhibition. Required for embryonic development. In Caenorhabditis briggsae, this protein is Protein zwilch homolog (zwl-1).